Consider the following 920-residue polypeptide: Plasma membrane ATPase (920 aa).

Basic and acidic residues predominate over residues 1–11; the sequence is MSDERITEKPP. A disordered region spans residues 1–71; sequence MSDERITEKP…AEEDDGPAAA (71 aa). Residues 1–117 lie on the Cytoplasmic side of the membrane; that stretch reads MSDERITEKP…REESENLLVK (117 aa). A compositionally biased stretch (acidic residues) spans 17–50; it reads SEGEPVPEEEVEEETEEEVPDEQSSEDDDIDGLI. A helical membrane pass occupies residues 118–138; that stretch reads FLMFFIGPIQFVMEAAAVLAA. The Extracellular portion of the chain corresponds to 139 to 142; the sequence is GLED. A helical transmembrane segment spans residues 143-162; the sequence is WVDFGVICGLLFLNAGVGFI. The Cytoplasmic segment spans residues 163 to 293; sequence QEFQAGSIVE…GQGHFTEVLN (131 aa). A helical membrane pass occupies residues 294–315; the sequence is GIGVILLVLVVITLLLIWTACF. Over 316-326 the chain is Extracellular; it reads YRTVRIVPILR. The helical transmembrane segment at 327-349 threads the bilayer; sequence YTLGITIVGVPVGLPAVVTTTMA. The Cytoplasmic segment spans residues 350–721; it reads GGAAYLAKKQ…IAILNHSLDI (372 aa). The active-site 4-aspartylphosphate intermediate is the Asp-380. Residues Asp-636 and Asp-640 each coordinate Mg(2+). The helical transmembrane segment at 722 to 740 threads the bilayer; sequence DLIVFIAIFADVATLAIAY. Residues 741–756 are Extracellular-facing; it reads DNAPFSPSPVKWNLPR. A helical transmembrane segment spans residues 757-776; it reads LWGMSIMMGIILAAGTWITL. The Cytoplasmic portion of the chain corresponds to 777–826; sequence TTMFLPKGGIIQNFGSIDGILFLEISLTENWLIFITRAVGPFWSSIPSWQ. Residues 827-847 form a helical membrane-spanning segment; the sequence is LAGAVFVVDVVATMFTLFGWW. Residues 848-859 lie on the Extracellular side of the membrane; it reads SQNWTDIVTVVR. The chain crosses the membrane as a helical span at residues 860-876; sequence IYIWSIGIFCCLGGAYY. Topologically, residues 877-920 are cytoplasmic; the sequence is LMSESETFDRLMNGKPLKENKSTRSVEDFLASMRRVSTQHEKGN.

It belongs to the cation transport ATPase (P-type) (TC 3.A.3) family. Type IIIA subfamily.

Its subcellular location is the cell membrane. It catalyses the reaction ATP + H2O + H(+)(in) = ADP + phosphate + 2 H(+)(out). Functionally, the plasma membrane ATPase of plants and fungi is a hydrogen ion pump. The proton gradient it generates drives the active transport of nutrients by H(+)-symport. The resulting external acidification and/or internal alkinization may mediate growth responses. The sequence is that of Plasma membrane ATPase from Zygosaccharomyces rouxii.